Consider the following 257-residue polypeptide: Ribosomal RNA small subunit methyltransferase J (257 aa).

S-adenosyl-L-methionine contacts are provided by residues 107–108, 123–124, and aspartate 177; these read RD and ER.

Belongs to the methyltransferase superfamily. RsmJ family.

Its subcellular location is the cytoplasm. The catalysed reaction is guanosine(1516) in 16S rRNA + S-adenosyl-L-methionine = N(2)-methylguanosine(1516) in 16S rRNA + S-adenosyl-L-homocysteine + H(+). Specifically methylates the guanosine in position 1516 of 16S rRNA. The sequence is that of Ribosomal RNA small subunit methyltransferase J from Haemophilus influenzae (strain 86-028NP).